The primary structure comprises 84 residues: Small ribosomal subunit protein bS18 (84 aa).

This sequence belongs to the bacterial ribosomal protein bS18 family. Part of the 30S ribosomal subunit. Forms a tight heterodimer with protein bS6.

Its function is as follows. Binds as a heterodimer with protein bS6 to the central domain of the 16S rRNA, where it helps stabilize the platform of the 30S subunit. This chain is Small ribosomal subunit protein bS18, found in Methylorubrum extorquens (strain CM4 / NCIMB 13688) (Methylobacterium extorquens).